The chain runs to 476 residues: Proline--tRNA ligase (476 aa).

The protein belongs to the class-II aminoacyl-tRNA synthetase family. ProS type 3 subfamily. As to quaternary structure, homodimer.

The protein resides in the cytoplasm. The catalysed reaction is tRNA(Pro) + L-proline + ATP = L-prolyl-tRNA(Pro) + AMP + diphosphate. Catalyzes the attachment of proline to tRNA(Pro) in a two-step reaction: proline is first activated by ATP to form Pro-AMP and then transferred to the acceptor end of tRNA(Pro). The polypeptide is Proline--tRNA ligase (Cenarchaeum symbiosum (strain A)).